A 164-amino-acid polypeptide reads, in one-letter code: UPF0262 protein Nham_0287 (164 aa).

Belongs to the UPF0262 family.

The chain is UPF0262 protein Nham_0287 from Nitrobacter hamburgensis (strain DSM 10229 / NCIMB 13809 / X14).